The sequence spans 476 residues: Aspartyl/glutamyl-tRNA(Asn/Gln) amidotransferase subunit B (476 aa).

This sequence belongs to the GatB/GatE family. GatB subfamily. Heterotrimer of A, B and C subunits.

It carries out the reaction L-glutamyl-tRNA(Gln) + L-glutamine + ATP + H2O = L-glutaminyl-tRNA(Gln) + L-glutamate + ADP + phosphate + H(+). The catalysed reaction is L-aspartyl-tRNA(Asn) + L-glutamine + ATP + H2O = L-asparaginyl-tRNA(Asn) + L-glutamate + ADP + phosphate + 2 H(+). Its function is as follows. Allows the formation of correctly charged Asn-tRNA(Asn) or Gln-tRNA(Gln) through the transamidation of misacylated Asp-tRNA(Asn) or Glu-tRNA(Gln) in organisms which lack either or both of asparaginyl-tRNA or glutaminyl-tRNA synthetases. The reaction takes place in the presence of glutamine and ATP through an activated phospho-Asp-tRNA(Asn) or phospho-Glu-tRNA(Gln). In Bacillus velezensis (strain DSM 23117 / BGSC 10A6 / LMG 26770 / FZB42) (Bacillus amyloliquefaciens subsp. plantarum), this protein is Aspartyl/glutamyl-tRNA(Asn/Gln) amidotransferase subunit B.